The chain runs to 302 residues: Putative peptide permease protein BMEII0861 (302 aa).

Positions 1–22 (MRSSIHASRLRKMGQSIPASTG) are disordered. Transmembrane regions (helical) follow at residues 38–58 (IFGL…PLWL), 101–121 (LLVA…IGAI), 147–167 (IFLL…VVVI), 230–250 (ILLE…AASW), and 268–288 (WQWL…NFIG). An ABC transmembrane type-1 domain is found at 97 to 288 (GRISLLVAVS…LAVLAINFIG (192 aa)).

The protein belongs to the binding-protein-dependent transport system permease family. As to quaternary structure, the complex is composed of two ATP-binding proteins (BMEII0863 and BMEII0864), two transmembrane proteins (BMEII0860 and BMEII0861) and a solute-binding protein (BMEII0859).

It is found in the cell inner membrane. Functionally, probably part of an ABC transporter complex that could be involved in peptide import. Probably responsible for the translocation of the substrate across the membrane. The sequence is that of Putative peptide permease protein BMEII0861 from Brucella melitensis biotype 1 (strain ATCC 23456 / CCUG 17765 / NCTC 10094 / 16M).